A 396-amino-acid chain; its full sequence is L-lactate dehydrogenase (396 aa).

Residues 1–380 enclose the FMN hydroxy acid dehydrogenase domain; the sequence is MIISAASDYR…SGDSLVQELG (380 aa). Tyrosine 24 provides a ligand contact to substrate. Residues serine 106 and glutamine 127 each contribute to the FMN site. Tyrosine 129 is a substrate binding site. Threonine 155 lines the FMN pocket. Arginine 164 is a substrate binding site. Lysine 251 serves as a coordination point for FMN. The active-site Proton acceptor is histidine 275. Arginine 278 serves as a coordination point for substrate. Residue 306 to 330 participates in FMN binding; it reads DSGIRNGLDVVRMIALGADTVLLGR.

Belongs to the FMN-dependent alpha-hydroxy acid dehydrogenase family. FMN serves as cofactor.

Its subcellular location is the cell inner membrane. The catalysed reaction is (S)-lactate + A = pyruvate + AH2. In terms of biological role, catalyzes the conversion of L-lactate to pyruvate. Is coupled to the respiratory chain. This chain is L-lactate dehydrogenase, found in Salmonella choleraesuis (strain SC-B67).